We begin with the raw amino-acid sequence, 263 residues long: Proliferating cell nuclear antigen (263 aa).

A DNA-binding region spans residues 61–80 (RCDRNLSMGMNLNNMAKMLR).

This sequence belongs to the PCNA family.

The protein resides in the nucleus. Its function is as follows. This protein is an auxiliary protein of DNA polymerase delta and is involved in the control of eukaryotic DNA replication by increasing the polymerase's processibility during elongation of the leading strand. In Zea mays (Maize), this protein is Proliferating cell nuclear antigen (PCNA).